We begin with the raw amino-acid sequence, 452 residues long: Phosphoglucosamine mutase (452 aa).

The Phosphoserine intermediate role is filled by serine 97. Residues serine 97, aspartate 236, aspartate 238, and aspartate 240 each coordinate Mg(2+). Serine 97 carries the phosphoserine modification.

The protein belongs to the phosphohexose mutase family. It depends on Mg(2+) as a cofactor. Post-translationally, activated by phosphorylation.

The enzyme catalyses alpha-D-glucosamine 1-phosphate = D-glucosamine 6-phosphate. Its function is as follows. Catalyzes the conversion of glucosamine-6-phosphate to glucosamine-1-phosphate. This chain is Phosphoglucosamine mutase, found in Prochlorococcus marinus subsp. pastoris (strain CCMP1986 / NIES-2087 / MED4).